Consider the following 271-residue polypeptide: Acetyl-coenzyme A carboxylase carboxyl transferase subunit beta (271 aa).

A CoA carboxyltransferase N-terminal domain is found at 21 to 271 (LWIQCPYCKQ…LGDLLALHTA (251 aa)). Residues Cys-25, Cys-28, Cys-43, and Cys-46 each coordinate Zn(2+). The C4-type zinc-finger motif lies at 25-46 (CPYCKQGSYRESLGNAQVCPHC).

It belongs to the AccD/PCCB family. Acetyl-CoA carboxylase is a heterohexamer composed of biotin carboxyl carrier protein (AccB), biotin carboxylase (AccC) and two subunits each of ACCase subunit alpha (AccA) and ACCase subunit beta (AccD). It depends on Zn(2+) as a cofactor.

The protein localises to the cytoplasm. It catalyses the reaction N(6)-carboxybiotinyl-L-lysyl-[protein] + acetyl-CoA = N(6)-biotinyl-L-lysyl-[protein] + malonyl-CoA. It participates in lipid metabolism; malonyl-CoA biosynthesis; malonyl-CoA from acetyl-CoA: step 1/1. Functionally, component of the acetyl coenzyme A carboxylase (ACC) complex. Biotin carboxylase (BC) catalyzes the carboxylation of biotin on its carrier protein (BCCP) and then the CO(2) group is transferred by the transcarboxylase to acetyl-CoA to form malonyl-CoA. The protein is Acetyl-coenzyme A carboxylase carboxyl transferase subunit beta of Lacticaseibacillus casei (strain BL23) (Lactobacillus casei).